The chain runs to 300 residues: Ribosomal RNA small subunit methyltransferase H (300 aa).

S-adenosyl-L-methionine-binding positions include 46 to 48 (GGH), Asp-65, Phe-92, Asp-107, and Gln-114.

Belongs to the methyltransferase superfamily. RsmH family.

The protein localises to the cytoplasm. The enzyme catalyses cytidine(1402) in 16S rRNA + S-adenosyl-L-methionine = N(4)-methylcytidine(1402) in 16S rRNA + S-adenosyl-L-homocysteine + H(+). Specifically methylates the N4 position of cytidine in position 1402 (C1402) of 16S rRNA. This is Ribosomal RNA small subunit methyltransferase H from Prochlorococcus marinus (strain MIT 9301).